A 72-amino-acid polypeptide reads, in one-letter code: Translational regulator CsrA (72 aa).

It belongs to the CsrA/RsmA family. As to quaternary structure, homodimer; the beta-strands of each monomer intercalate to form a hydrophobic core, while the alpha-helices form wings that extend away from the core.

The protein localises to the cytoplasm. Functionally, a translational regulator that binds mRNA to regulate translation initiation and/or mRNA stability. Usually binds in the 5'-UTR at or near the Shine-Dalgarno sequence preventing ribosome-binding, thus repressing translation. Its main target seems to be the major flagellin gene, while its function is anatagonized by FliW. The polypeptide is Translational regulator CsrA (Lachnoclostridium phytofermentans (strain ATCC 700394 / DSM 18823 / ISDg) (Clostridium phytofermentans)).